A 217-amino-acid chain; its full sequence is NAD(P)H-quinone oxidoreductase subunit M, chloroplastic (217 aa).

The transit peptide at 1–21 (MVAAFSYTACTKLSLLHPSMV) directs the protein to the chloroplast. Residues 48 to 67 (ETETLKEEQSTEKMKKQPTP) form a disordered region. Residues 50–62 (ETLKEEQSTEKMK) are compositionally biased toward basic and acidic residues.

It belongs to the NDH complex subunit M family. As to quaternary structure, part of the chloroplast NDH complex, composed of a mixture of chloroplast and nucleus encoded subunits. Component of the NDH subcomplex A, at least composed of ndhH, ndhI, ndhJ, ndhK, ndhL, ndhM, ndhN and ndhO.

It is found in the plastid. It localises to the chloroplast thylakoid membrane. The enzyme catalyses a plastoquinone + NADH + (n+1) H(+)(in) = a plastoquinol + NAD(+) + n H(+)(out). The catalysed reaction is a plastoquinone + NADPH + (n+1) H(+)(in) = a plastoquinol + NADP(+) + n H(+)(out). Its function is as follows. NDH shuttles electrons from NAD(P)H:plastoquinone, via FMN and iron-sulfur (Fe-S) centers, to quinones in the photosynthetic chain and possibly in a chloroplast respiratory chain. The immediate electron acceptor for the enzyme in this species is believed to be plastoquinone. Couples the redox reaction to proton translocation, and thus conserves the redox energy in a proton gradient. The chain is NAD(P)H-quinone oxidoreductase subunit M, chloroplastic from Arabidopsis thaliana (Mouse-ear cress).